Here is a 538-residue protein sequence, read N- to C-terminus: Cytochrome P450 monooxygenase astC (538 aa).

Residues 18–38 (ALMLPALVGCALLIYRAFFAI) traverse the membrane as a helical segment. C481 contacts heme.

Belongs to the cytochrome P450 family. It depends on heme as a cofactor.

The protein resides in the membrane. Its pathway is secondary metabolite biosynthesis; terpenoid biosynthesis. Its function is as follows. Cytochrome P450 monooxygenase; part of the gene cluster that mediates the biosynthesis of the sesquiterpenoid aspterric acid (AA), an inhibitor of dihydroxy-acid dehydratase (DHAD) effective as an herbicide. AstC catalyzes the third and last step within the pathway and converts the alpha-epoxy carboxylate intermediate produced by the cytochrome P450 monooxygenase astC from (-)daucane into the tricyclic aspterric acid. This Aspergillus terreus (strain NIH 2624 / FGSC A1156) protein is Cytochrome P450 monooxygenase astC.